The primary structure comprises 378 residues: Erythronate-4-phosphate dehydrogenase (378 aa).

Substrate-binding residues include Ser45 and Thr66. NAD(+) is bound by residues Asp146 and Thr175. Residue Arg208 is part of the active site. Residue Asp232 participates in NAD(+) binding. Glu237 is a catalytic residue. His254 acts as the Proton donor in catalysis. NAD(+) is bound at residue Gly257. Tyr258 contacts substrate.

It belongs to the D-isomer specific 2-hydroxyacid dehydrogenase family. PdxB subfamily. Homodimer.

It is found in the cytoplasm. It catalyses the reaction 4-phospho-D-erythronate + NAD(+) = (R)-3-hydroxy-2-oxo-4-phosphooxybutanoate + NADH + H(+). It functions in the pathway cofactor biosynthesis; pyridoxine 5'-phosphate biosynthesis; pyridoxine 5'-phosphate from D-erythrose 4-phosphate: step 2/5. Its function is as follows. Catalyzes the oxidation of erythronate-4-phosphate to 3-hydroxy-2-oxo-4-phosphonooxybutanoate. The chain is Erythronate-4-phosphate dehydrogenase from Escherichia coli O81 (strain ED1a).